Here is a 570-residue protein sequence, read N- to C-terminus: Multidrug and toxin extrusion protein 1 (570 aa).

The residue at position 1 (Met-1) is an N-acetylmethionine. Residues 1–37 (MEAPEEPAPVRGGPEATLEVRGSRCLRLSAFREELRA) lie on the Cytoplasmic side of the membrane. Residues 38 to 58 (LLVLAGPAFLVQLMVFLISFI) traverse the membrane as a helical segment. At 59–72 (SSVFCGHLGKLELD) the chain is on the extracellular side. Residues 73–93 (AVTLAIAVINVTGVSVGFGLS) traverse the membrane as a helical segment. Over 94-123 (SACDTLISQTYGSQNLKHVGVILQRSALVL) the chain is Cytoplasmic. The chain crosses the membrane as a helical span at residues 124-144 (LLCCFPCWALFLNTQHILLLF). The Extracellular segment spans residues 145–152 (RQDPDVSR). Residues 153–173 (LTQTYVTIFIPALPATFLYML) traverse the membrane as a helical segment. The Cytoplasmic segment spans residues 174–176 (QVK). A helical transmembrane segment spans residues 177-197 (YLLNQGIVLPQIVTGVAANLV). Over 198-216 (NALANYLFLHQLHLGVIGS) the chain is Extracellular. A helical membrane pass occupies residues 217-237 (ALANLISQYTLALLLFLYILG). Residues 238–256 (KKLHQATWGGWSLECLQDW) are Cytoplasmic-facing. The helical transmembrane segment at 257–276 (ASFLRLAIPSMLMLCMEWWA) threads the bilayer. Topologically, residues 277-295 (YEVGSFLSGILGMVELGAQ) are extracellular. A helical transmembrane segment spans residues 296–316 (SIVYELAIIVYMVPAGFSVAA). Residues 317 to 336 (SVRVGNALGAGDMEQARKSS) lie on the Cytoplasmic side of the membrane. The helical transmembrane segment at 337 to 357 (TVSLLITVLFAVAFSVLLLSC) threads the bilayer. Residues 358–370 (KDHVGYIFTTDRD) are Extracellular-facing. The helical transmembrane segment at 371–391 (IINLVAQVVPIYAVSHLFEAL) threads the bilayer. The Cytoplasmic segment spans residues 392-408 (ACTSGGVLRGSGNQKVG). A helical membrane pass occupies residues 409 to 429 (AIVNTIGYYVVGLPIGIALMF). Topologically, residues 430-437 (ATTLGVMG) are extracellular. A helical transmembrane segment spans residues 438–458 (LWSGIIICTVFQAVCFLGFII). Residues 459–546 (QLNWKKACQQ…LSRKQLVLRR (88 aa)) are Cytoplasmic-facing. The tract at residues 508 to 534 (DVGKTGEPQSDQQMRQEEPLPEHPQDG) is disordered. Over residues 521-533 (MRQEEPLPEHPQD) the composition is skewed to basic and acidic residues. Residues 547 to 567 (GLLLLGVFLILLVGILVRFYV) traverse the membrane as a helical segment. The Extracellular portion of the chain corresponds to 568–570 (RIQ).

This sequence belongs to the multi antimicrobial extrusion (MATE) (TC 2.A.66.1) family. As to expression, widely expressed. The highest expression is found in adrenal gland, and to a lower extent in liver, skeletal muscle and kidney. In testis, primarily localized throughout the adluminal compartment of the seminiferous tubules with expression at the peritubular myoid cells and Leydig cells.

It is found in the cell membrane. Its subcellular location is the apical cell membrane. The enzyme catalyses thiamine(out) + H(+)(in) = thiamine(in) + H(+)(out). It carries out the reaction estrone 3-sulfate(in) + H(+)(out) = estrone 3-sulfate(out) + H(+)(in). It catalyses the reaction creatinine(in) + H(+)(out) = creatinine(out) + H(+)(in). The catalysed reaction is agmatine(in) + H(+)(out) = agmatine(out) + H(+)(in). In terms of biological role, multidrug efflux pump that functions as a H(+)/organic cation antiporter. Plays a physiological role in the excretion of cationic compounds including endogenous metabolites, drugs, toxins through the kidney and liver, into urine and bile respectively. Mediates the efflux of endogenous compounds such as creatinine, vitamin B1/thiamine, agmatine and estrone-3-sulfate. May also contribute to regulate the transport of cationic compounds in testis across the blood-testis-barrier. The polypeptide is Multidrug and toxin extrusion protein 1 (Homo sapiens (Human)).